The sequence spans 581 residues: Serine/threonine-protein kinase PINK1, mitochondrial (581 aa).

The transit peptide at 1–77 directs the protein to the mitochondrion; that stretch reads MAVRQALGRG…RFFRQSVAGL (77 aa). The Mitochondrial intermembrane portion of the chain corresponds to 78-93; it reads AARLQRQFVVRAWGCA. Residues 94-110 traverse the membrane as a helical segment; it reads GPCGRAVFLAFGLGLGL. The required for outer membrane localization stretch occupies residues 111–117; that stretch reads IEEKQAE. The Cytoplasmic portion of the chain corresponds to 111–581; sequence IEEKQAESRR…LLLCSWRAAL (471 aa). In terms of domain architecture, Protein kinase spans 156 to 511; it reads YLIGQSIGKG…VAANVLHLSL (356 aa). ATP-binding positions include 162-170 and lysine 186; that span reads IGKGCSAAV. Residues 189-208 form a disordered region; it reads GLLPGRGPGTSAPGEGQERA. Phosphoserine; by autocatalysis is present on serine 228. Residue aspartate 362 is the Proton acceptor of the active site. Phosphoserine; by autocatalysis is present on serine 402.

This sequence belongs to the protein kinase superfamily. Ser/Thr protein kinase family. Upon mitochondrial depolarization, it forms a supercomplex with TOM and TIM23 complexes. PINK1-TOM-TIM23 supercomplex formation requires PINK1 interaction with TOMM20 and TOMM70 and is critical for PINK1 stabilization at the outer mitochondrial membrane, kinase activation and downstream mitophagy. Upon mitochondrial depolarization, interacts with TIMM23; the interaction is required for PINK1 accumulation at the outer mitochondrial membrane, kinase activation by autophosphorylation and PRKN recruitement to mitochondria. Interacts with PRKN. Interacts with FBXO7. Forms a complex with PRKN and PARK7. Interacts with NENF. Mg(2+) serves as cofactor. Post-translationally, proteolytically cleaved. In healthy cells, the precursor is continuously imported into the inner mitochondrial membrane (IMM), where it is proteolytically cleaved by mitochondrial-processing peptidase (MPP) and then undergoes further proteolytic cleavage by PARL or AFG3L2 to give rise to the 52 kDa short form. The 52 kDa short form is then released into the cytosol where it rapidly undergoes proteasome-dependent degradation. In unhealthy cells, when cellular stress conditions lead to the loss of mitochondrial membrane potential, mitochondrial import is impaired leading to the precursor accumulating on the outer mitochondrial membrane (OMM). If accumulation at the OMM fails and it is imported into the depolarized mitochondria, it undergoes cleavage by the IMM protease OMA1, promoting its subsequent degradation by the proteasome. In terms of processing, autophosphorylated. Loss of mitochondrial membrane potential results in the precursor accumulating on the outer mitochondrial membrane (OMM) where it is activated by autophosphorylation. Autophosphorylation at Ser-228 and Ser-402 is sufficient and essential for selective recruitment of PRKN to depolarized mitochondria, via PINK1-dependent phosphorylation of ubiquitin and maybe PRKN. As to expression, highly expressed in heart, skeletal muscle and testis, and at lower levels in brain, placenta, liver, kidney, pancreas, prostate, ovary and small intestine. Present in the embryonic testis from an early stage of development.

It is found in the mitochondrion outer membrane. The protein resides in the mitochondrion inner membrane. It localises to the cytoplasm. The protein localises to the cytosol. It catalyses the reaction L-seryl-[protein] + ATP = O-phospho-L-seryl-[protein] + ADP + H(+). It carries out the reaction L-threonyl-[protein] + ATP = O-phospho-L-threonyl-[protein] + ADP + H(+). Serine/threonine-protein kinase which acts as a sensor of mitochondrial damage and protects against mitochondrial dysfunction during cellular stress. It phosphorylates mitochondrial proteins to coordinate mitochondrial quality control mechanisms that remove and replace dysfunctional mitochondrial components. Depending on the severity of mitochondrial damage, activity ranges from preventing apoptosis and stimulating mitochondrial biogenesis to eliminating severely damaged mitochondria via PINK1-PRKN-dependent mitophagy. When cellular stress results in irreversible mitochondrial damage, PINK1 accumulates at the outer mitochondrial membrane (OMM) where it phosphorylates pre-existing polyubiquitin chains at 'Ser-65', recruits PRKN from the cytosol to the OMM and activates PRKN by phosphorylation at 'Ser-65'; activated PRKN then ubiquinates VDAC1 and other OMM proteins to initiate mitophagy. The PINK1-PRKN pathway also promotes fission of damaged mitochondria through phosphorylation and PRKN-dependent degradation of mitochondrial proteins involved in fission such as MFN2. This prevents the refusion of unhealthy mitochondria with the mitochondrial network or initiates mitochondrial fragmentation facilitating their later engulfment by autophagosomes. Also promotes mitochondrial fission independently of PRKN and ATG7-mediated mitophagy, via the phosphorylation and activation of DNM1L. Regulates motility of damaged mitochondria by promoting the ubiquitination and subsequent degradation of MIRO1 and MIRO2; in motor neurons, this likely inhibits mitochondrial intracellular anterograde transport along the axons which probably increases the chance of the mitochondria undergoing mitophagy in the soma. Required for ubiquinone reduction by mitochondrial complex I by mediating phosphorylation of complex I subunit NDUFA10. Phosphorylates LETM1, positively regulating its mitochondrial calcium transport activity. The chain is Serine/threonine-protein kinase PINK1, mitochondrial (PINK1) from Homo sapiens (Human).